A 242-amino-acid polypeptide reads, in one-letter code: Tryptophan synthase alpha chain (242 aa).

Active-site proton acceptor residues include E32 and D43.

It belongs to the TrpA family. In terms of assembly, tetramer of two alpha and two beta chains.

The protein resides in the plastid. The protein localises to the chloroplast. The enzyme catalyses (1S,2R)-1-C-(indol-3-yl)glycerol 3-phosphate + L-serine = D-glyceraldehyde 3-phosphate + L-tryptophan + H2O. Its pathway is amino-acid biosynthesis; L-tryptophan biosynthesis; L-tryptophan from chorismate: step 5/5. In terms of biological role, the alpha subunit is responsible for the aldol cleavage of indoleglycerol phosphate to indole and glyceraldehyde 3-phosphate. The sequence is that of Tryptophan synthase alpha chain from Cyanidium caldarium (Red alga).